Consider the following 336-residue polypeptide: Potassium channel subfamily K member 1 (336 aa).

The Cytoplasmic portion of the chain corresponds to 1 to 20 (MLQSLAGSSCVRLVERHRSA). A helical membrane pass occupies residues 21–41 (WCFGFLVLGYLLYLVFGAVVF). Residues 42-103 (SSVELPYEDL…SNASGNWNWD (62 aa)) lie on the Extracellular side of the membrane. The N-linked (GlcNAc...) asparagine glycan is linked to Asn-95. The helical intramembrane region spans 104-116 (FTSALFFASTVLS). Residues 117-122 (TTGYGH) lie within the membrane without spanning it. The tract at residues 117-122 (TTGYGH) is selectivity filter 1. Residues 123–132 (TVPLSDGGKA) are Extracellular-facing. The helical transmembrane segment at 133–156 (FCIIYSVIGIPFTLLFLTAVVQRV) threads the bilayer. Over 157 to 181 (TIHVTRRPVLYFHVRWGFSKQAVAI) the chain is Cytoplasmic. A helical membrane pass occupies residues 182–202 (VHAVLLGVVTVSCFFFIPAAV). Topologically, residues 203–211 (FSVLEDDWN) are extracellular. The segment at residues 212–224 (FLESFYFCFISLS) is an intramembrane region (helical). Residues 225-230 (TIGLGD) are selectivity filter 2. Residues 225-231 (TIGLGDY) lie within the membrane without spanning it. Topologically, residues 232–243 (VPGEGYNQKFRE) are extracellular. The chain crosses the membrane as a helical span at residues 244-267 (LYKIGITCYLLLGLIAMLVVLETF). Topologically, residues 268-336 (CELHELKKFR…PALADGASDH (69 aa)) are cytoplasmic. Lys-274 is covalently cross-linked (Glycyl lysine isopeptide (Lys-Gly) (interchain with G-Cter in SUMO)). The tract at residues 293-299 (IIEHDQL) is important for intracellular retention in recycling endosomes. The segment at 307–336 (QAAGVQEDQKQNEPFVSPQPPALADGASDH) is disordered.

Belongs to the two pore domain potassium channel (TC 1.A.1.8) family. As to quaternary structure, homodimer; disulfide-linked. Heterodimer with KCNK2; disulfide-linked. In astrocytes, forms mostly heterodimeric potassium channels with KCNK2, with only a minor proportion of functional channels containing homodimeric KCNK1. Interacts with KCNK3 and KCNK9, forming functional heterodimeric channels. Interacts with GNG4. Identified in a complex with PSD and ARF6; interacts only with PSD that is bound to ARF6. Interacts with UBE2I. Post-translationally, sumoylation is controversial. Sumoylated by UBE2I. Not sumoylated when expressed in xenopus oocytes or mammalian cells. Sumoylation inactivates the channel, but does not interfere with expression at the cell membrane. Sumoylation of a single subunit is sufficient to silence the dimeric channel. Sumoylation of KCNK1 is sufficient to silence heterodimeric channels formed by KCNK1 and KCNK3 or KCNK9. Desumoylated by SENP1; this activates the channel. Desumoylated by SENP1; this strongly increases halothane-mediated activation of heterodimeric channels formed with KCNK9. SENP1 treatment has no effect.

The protein resides in the cell membrane. It localises to the recycling endosome. The protein localises to the synaptic cell membrane. Its subcellular location is the cytoplasmic vesicle. It is found in the perikaryon. The protein resides in the cell projection. It localises to the dendrite. The protein localises to the apical cell membrane. The enzyme catalyses K(+)(in) = K(+)(out). The catalysed reaction is NH4(+)(in) = NH4(+)(out). It catalyses the reaction Na(+)(in) = Na(+)(out). It carries out the reaction Rb(+)(in) = Rb(+)(out). The enzyme catalyses Cs(+)(in) = Cs(+)(out). The catalysed reaction is Li(+)(in) = Li(+)(out). It catalyses the reaction L-glutamate(out) = L-glutamate(in). It carries out the reaction chloride(in) = chloride(out). Ion channel that contributes to passive transmembrane potassium transport and to the regulation of the resting membrane potential in brain astrocytes, but also in kidney and in other tissues. Forms dimeric channels through which potassium ions pass in accordance with their electrochemical gradient. The channel is selective for K(+) ions at physiological potassium concentrations and at neutral pH, but becomes permeable to Na(+) at subphysiological K(+) levels and upon acidification of the extracellular medium. The homodimer has very low potassium channel activity, when expressed in heterologous systems, and can function as weakly inward rectifying potassium channel. Channel activity is modulated by activation of serotonin receptors. Heterodimeric channels containing KCNK1 and KCNK2 have much higher activity, and may represent the predominant form in astrocytes. Heterodimeric channels containing KCNK1 and KCNK3 or KCNK9 have much higher activity. Heterodimeric channels formed by KCNK1 and KCNK9 may contribute to halothane-sensitive currents. Mediates outward rectifying potassium currents in dentate gyrus granule cells and contributes to the regulation of their resting membrane potential. Contributes to the regulation of action potential firing in dentate gyrus granule cells and down-regulates their intrinsic excitability. In astrocytes, the heterodimer formed by KCNK1 and KCNK2 is required for rapid glutamate release in response to activation of G-protein coupled receptors, such as F2R and CNR1. Required for normal ion and water transport in the kidney. Contributes to the regulation of the resting membrane potential of pancreatic beta cells. The low channel activity of homodimeric KCNK1 may be due to sumoylation. The low channel activity may be due to rapid internalization from the cell membrane and retention in recycling endosomes. Permeable to monovalent cations with ion selectivity for K(+) &gt; Rb(+) &gt;&gt; NH4(+) &gt;&gt; Cs(+) = Na(+) = Li(+). This is Potassium channel subfamily K member 1 from Bos taurus (Bovine).